Reading from the N-terminus, the 410-residue chain is Lipoyl synthase, mitochondrial (410 aa).

[4Fe-4S] cluster-binding residues include Cys134, Cys139, Cys145, Cys165, Cys169, Cys172, and Ser390. Residues 148 to 379 (AGKSTAATAT…AKIGNDLGFL (232 aa)) form the Radical SAM core domain.

It belongs to the radical SAM superfamily. Lipoyl synthase family. The cofactor is [4Fe-4S] cluster.

It is found in the mitochondrion. It carries out the reaction [[Fe-S] cluster scaffold protein carrying a second [4Fe-4S](2+) cluster] + N(6)-octanoyl-L-lysyl-[protein] + 2 oxidized [2Fe-2S]-[ferredoxin] + 2 S-adenosyl-L-methionine + 4 H(+) = [[Fe-S] cluster scaffold protein] + N(6)-[(R)-dihydrolipoyl]-L-lysyl-[protein] + 4 Fe(3+) + 2 hydrogen sulfide + 2 5'-deoxyadenosine + 2 L-methionine + 2 reduced [2Fe-2S]-[ferredoxin]. Its pathway is protein modification; protein lipoylation via endogenous pathway; protein N(6)-(lipoyl)lysine from octanoyl-[acyl-carrier-protein]: step 2/2. Its function is as follows. Catalyzes the radical-mediated insertion of two sulfur atoms into the C-6 and C-8 positions of the octanoyl moiety bound to the lipoyl domains of lipoate-dependent enzymes, thereby converting the octanoylated domains into lipoylated derivatives. The polypeptide is Lipoyl synthase, mitochondrial (Schistosoma mansoni (Blood fluke)).